The chain runs to 320 residues: Ciliary microtubule inner protein 2A (320 aa).

This sequence belongs to the CIMIP2 family. Microtubule inner protein component of sperm flagellar doublet microtubules. As to expression, expressed in sperm.

It is found in the cytoplasm. The protein resides in the cytoskeleton. The protein localises to the flagellum axoneme. Its function is as follows. Microtubule inner protein (MIP) part of the dynein-decorated doublet microtubules (DMTs) in flagellum axoneme. Binds to the intra-tubulin interfaces. This is Ciliary microtubule inner protein 2A (CIMIP2A) from Bos taurus (Bovine).